A 1185-amino-acid chain; its full sequence is Ubiquitin carboxyl-terminal hydrolase 36 (1185 aa).

Over residues 126-169 the composition is skewed to polar residues; that stretch reads TGKALSSNGHDNTNGVNGSSAATVNGNRKQTVEQSNQNSTTNPN. A disordered region spans residues 126–174; that stretch reads TGKALSSNGHDNTNGVNGSSAATVNGNRKQTVEQSNQNSTTNPNELPKP. Residues 199–509 form the USP domain; sequence AGMLNVGNTC…NAYIMFYELD (311 aa). The Nucleophile role is filled by Cys-208. Residue His-468 is the Proton acceptor of the active site. Residues Ser-552 and Ser-554 each carry the phosphoserine modification. Low complexity predominate over residues 642–658; that stretch reads ANSNKSSCNNNTLTTNS. Disordered regions lie at residues 642-804, 818-975, 1056-1122, and 1136-1185; these read ANSN…TDAI, HRAT…YQSE, APTL…GSFP, and NKFK…QQQS. Acidic residues predominate over residues 670-683; the sequence is SDEEDEDEDSDDDV. Thr-716 is subject to Phosphothreonine. Ser-726 and Ser-728 each carry phosphoserine. 2 stretches are compositionally biased toward low complexity: residues 778-797 and 836-853; these read KSNG…SNNN and QQQQ…SLIS. The residue at position 867 (Ser-867) is a Phosphoserine. Thr-870 carries the post-translational modification Phosphothreonine. The residue at position 873 (Ser-873) is a Phosphoserine. Over residues 891 to 920 the composition is skewed to acidic residues; the sequence is DDNDDDDEDADEEDDADADAEQEEYDDEVV. Composition is skewed to polar residues over residues 924 to 942 and 959 to 975; these read TTPS…SKPS and SAKS…YQSE. Residue Thr-925 is modified to Phosphothreonine. The segment covering 1062 to 1071 has biased composition (basic and acidic residues); it reads EAREQRKRDA. Composition is skewed to low complexity over residues 1151–1161 and 1172–1185; these read QQQRALQRHLA and QSTG…QQQS.

This sequence belongs to the peptidase C19 family. As to quaternary structure, interacts with atms/PAF1, but not with CycT.

The protein localises to the nucleus. It is found in the nucleolus. It carries out the reaction Thiol-dependent hydrolysis of ester, thioester, amide, peptide and isopeptide bonds formed by the C-terminal Gly of ubiquitin (a 76-residue protein attached to proteins as an intracellular targeting signal).. Its function is as follows. Required for maintaining multiple types of adult stem cells, including male and female germline, epithelial follicle cell and intestinal stem cells. May function as a transcriptional repressor by continually deubiquiting histone H2B at the promoters of genes critical for cellular differentiation, thereby preventing histone H3 'Lys-4' trimethylation (H3K4). Controls selective autophagy activation by ubiquitinated proteins. This is Ubiquitin carboxyl-terminal hydrolase 36 (Usp36) from Drosophila mojavensis (Fruit fly).